Consider the following 664-residue polypeptide: Glycine--tRNA ligase beta subunit (664 aa).

This sequence belongs to the class-II aminoacyl-tRNA synthetase family. In terms of assembly, tetramer of two alpha and two beta subunits.

The protein resides in the cytoplasm. It carries out the reaction tRNA(Gly) + glycine + ATP = glycyl-tRNA(Gly) + AMP + diphosphate. The polypeptide is Glycine--tRNA ligase beta subunit (glyS) (Aquifex aeolicus (strain VF5)).